A 60-amino-acid polypeptide reads, in one-letter code: Large ribosomal subunit protein bL32 (60 aa).

Belongs to the bacterial ribosomal protein bL32 family.

In Thermotoga maritima (strain ATCC 43589 / DSM 3109 / JCM 10099 / NBRC 100826 / MSB8), this protein is Large ribosomal subunit protein bL32 (rpmF).